Reading from the N-terminus, the 265-residue chain is Speedy protein E8 (265 aa).

A disordered region spans residues 1–80; that stretch reads MGQILGKIMM…EPEKELAPEP (80 aa). Acidic residues predominate over residues 66–80; that stretch reads DESDDEPEKELAPEP.

Belongs to the Speedy/Ringo family.

In Homo sapiens (Human), this protein is Speedy protein E8.